We begin with the raw amino-acid sequence, 311 residues long: MDYKEEFKKINKKLVERYSKLDDSEEFWAYLYKPLRPSIRINTLKGNLKEIKALLEEKFELEPIPWTKGEGFYIKSYDVNYGQLIEYSLGLIIPQEASSMIPPVVLDPKPSEVILDMAAAPGSKTTQMAQYMENEGCIIANDAKRDRANILIANLTRAGVLIAKVTVKDGAYFARYENTFDRVLLDAPCSSVGMIRKNFKFARTWSIGKVYYHSRLQKRLILAAYKSLKPGGVLVYSTCTVDPLENEEVVDFLLQKTDAKLEKVKLPLKTSEPVIEWEGRKYSDEVRKTIRIHPQDNDTEAFYIAKIRKPR.

Residues 118–124 (AAAPGSK), Asp142, Asp169, and Asp186 each bind S-adenosyl-L-methionine. The Nucleophile role is filled by Cys239.

The protein belongs to the class I-like SAM-binding methyltransferase superfamily. RsmB/NOP family. As to quaternary structure, forms a tripartite complex with archease and tRNA. Binds only the oligomeric forms of the archease.

The protein localises to the cytoplasm. The enzyme catalyses cytidine(49) in tRNA precursor + S-adenosyl-L-methionine = 5-methylcytidine(49) in tRNA precursor + S-adenosyl-L-homocysteine + H(+). Substrate specificity and tendency to aggregate are influenced by archease. Catalyzes AdoMet-dependent formation of m5C in tRNA. In the presence of protein archease, specifically methylates the cytosine at position 49 (m5C49) of tRNA. In the absence of archease, catalyzes the formation of m5C at many locations in tRNAs or rRNAs. In Pyrococcus abyssi (strain GE5 / Orsay), this protein is tRNA (cytosine(49)-C(5))-methyltransferase.